A 616-amino-acid polypeptide reads, in one-letter code: Dihydroxy-acid dehydratase (616 aa).

Aspartate 81 contributes to the Mg(2+) binding site. Position 122 (cysteine 122) interacts with [2Fe-2S] cluster. Mg(2+) is bound by residues aspartate 123 and lysine 124. An N6-carboxylysine modification is found at lysine 124. Residue cysteine 195 coordinates [2Fe-2S] cluster. Glutamate 491 is a Mg(2+) binding site. Serine 517 acts as the Proton acceptor in catalysis.

It belongs to the IlvD/Edd family. As to quaternary structure, homodimer. It depends on [2Fe-2S] cluster as a cofactor. The cofactor is Mg(2+).

The catalysed reaction is (2R)-2,3-dihydroxy-3-methylbutanoate = 3-methyl-2-oxobutanoate + H2O. It catalyses the reaction (2R,3R)-2,3-dihydroxy-3-methylpentanoate = (S)-3-methyl-2-oxopentanoate + H2O. Its pathway is amino-acid biosynthesis; L-isoleucine biosynthesis; L-isoleucine from 2-oxobutanoate: step 3/4. It functions in the pathway amino-acid biosynthesis; L-valine biosynthesis; L-valine from pyruvate: step 3/4. In terms of biological role, functions in the biosynthesis of branched-chain amino acids. Catalyzes the dehydration of (2R,3R)-2,3-dihydroxy-3-methylpentanoate (2,3-dihydroxy-3-methylvalerate) into 2-oxo-3-methylpentanoate (2-oxo-3-methylvalerate) and of (2R)-2,3-dihydroxy-3-methylbutanoate (2,3-dihydroxyisovalerate) into 2-oxo-3-methylbutanoate (2-oxoisovalerate), the penultimate precursor to L-isoleucine and L-valine, respectively. In Escherichia coli (strain 55989 / EAEC), this protein is Dihydroxy-acid dehydratase.